The chain runs to 347 residues: UDP-3-O-acylglucosamine N-acyltransferase (347 aa).

H241 acts as the Proton acceptor in catalysis.

Belongs to the transferase hexapeptide repeat family. LpxD subfamily. As to quaternary structure, homotrimer.

The catalysed reaction is a UDP-3-O-[(3R)-3-hydroxyacyl]-alpha-D-glucosamine + a (3R)-hydroxyacyl-[ACP] = a UDP-2-N,3-O-bis[(3R)-3-hydroxyacyl]-alpha-D-glucosamine + holo-[ACP] + H(+). Its pathway is bacterial outer membrane biogenesis; LPS lipid A biosynthesis. Its function is as follows. Catalyzes the N-acylation of UDP-3-O-acylglucosamine using 3-hydroxyacyl-ACP as the acyl donor. Is involved in the biosynthesis of lipid A, a phosphorylated glycolipid that anchors the lipopolysaccharide to the outer membrane of the cell. The protein is UDP-3-O-acylglucosamine N-acyltransferase of Nitrosococcus oceani (strain ATCC 19707 / BCRC 17464 / JCM 30415 / NCIMB 11848 / C-107).